Here is a 682-residue protein sequence, read N- to C-terminus: Putative protein RhsE (682 aa).

Basic and acidic residues predominate over residues 348-360; the sequence is ENGEREKAQRRSL. The disordered stretch occupies residues 348–372; that stretch reads ENGEREKAQRRSLAETLQQEGSENG.

The protein belongs to the RHS family.

Functionally, rhs elements have a nonessential function. They may play an important role in the natural ecology of the cell. The protein is Putative protein RhsE (rhsE) of Escherichia coli (strain K12).